Reading from the N-terminus, the 472-residue chain is Ribulose bisphosphate carboxylase large chain (472 aa).

Substrate is bound by residues N115 and T165. The active-site Proton acceptor is the K167. K169 provides a ligand contact to substrate. 3 residues coordinate Mg(2+): K193, D195, and E196. An N6-carboxylysine modification is found at K193. The active-site Proton acceptor is H286. Substrate contacts are provided by R287, H319, and S371.

It belongs to the RuBisCO large chain family. Type I subfamily. In terms of assembly, heterohexadecamer of 8 large chains and 8 small chains. Mg(2+) is required as a cofactor.

The catalysed reaction is 2 (2R)-3-phosphoglycerate + 2 H(+) = D-ribulose 1,5-bisphosphate + CO2 + H2O. It carries out the reaction D-ribulose 1,5-bisphosphate + O2 = 2-phosphoglycolate + (2R)-3-phosphoglycerate + 2 H(+). Its function is as follows. RuBisCO catalyzes two reactions: the carboxylation of D-ribulose 1,5-bisphosphate, the primary event in carbon dioxide fixation, as well as the oxidative fragmentation of the pentose substrate. Both reactions occur simultaneously and in competition at the same active site. The sequence is that of Ribulose bisphosphate carboxylase large chain from Solemya velum gill symbiont.